Here is a 776-residue protein sequence, read N- to C-terminus: Transcriptional regulator QRICH1 (776 aa).

At Met-1 the chain carries N-acetylmethionine. The 43-residue stretch at 6–48 (ENTISFEEYIRVKARSVPQHRMKEFLDSLASKGPEALQEFQQT) folds into the CARD domain. Disordered regions lie at residues 139–164 (IQGQ…PSQL) and 218–240 (ALSP…GTAS). Ser-345 is modified (phosphoserine). Glycyl lysine isopeptide (Lys-Gly) (interchain with G-Cter in SUMO2) cross-links involve residues Lys-353 and Lys-358. A compositionally biased stretch (low complexity) spans 419-429 (QQQPQQQTPQE). Residues 419–441 (QQQPQQQTPQEQTPPPQQQQQQL) form a disordered region. A Phosphoserine modification is found at Ser-464.

Its subcellular location is the nucleus. The protein localises to the cytoplasm. It localises to the cell membrane. Its function is as follows. Transcriptional regulator that acts as a mediator of the integrated stress response (ISR) through transcriptional control of protein homeostasis under conditions of ER stress. Controls the outcome of the unfolded protein response (UPR) which is an ER-stress response pathway. ER stress induces QRICH1 translation by a ribosome translation re-initiation mechanism in response to EIF2S1/eIF-2-alpha phosphorylation, and stress-induced QRICH1 regulates a transcriptional program associated with protein translation, protein secretion-mediated proteotoxicity and cell death during the terminal UPR. May cooperate with ATF4 transcription factor signaling to regulate ER homeostasis which is critical for cell viability. Up-regulates CASP3/caspase-3 activity in epithelial cells under ER stress. Central regulator of proteotoxicity associated with ER stress-mediated inflammatory diseases in the intestines and liver. Involved in chondrocyte hypertrophy, a process required for normal longitudinal bone growth. The chain is Transcriptional regulator QRICH1 from Homo sapiens (Human).